The chain runs to 217 residues: Biogenesis of lysosome-related organelles complex 1 subunit 4 (217 aa).

The disordered stretch occupies residues 1-57 (MEGSFSDGGALPEGLAEEAEPQGAAWSGDSGTVSQSHSSASGPWEDEGAEDGAPGRD). Residues 29–41 (DSGTVSQSHSSAS) show a composition bias toward polar residues. Positions 136 to 165 (DRLEAFVRMVGGRVARMEEQVTKAEAELGT) form a coiled coil. Position 165 is a phosphothreonine (threonine 165).

The protein belongs to the BLOC1S4 family. In terms of assembly, interacts with BLOC1S5 and BLOC1S6. Component of the biogenesis of lysosome-related organelles complex 1 (BLOC-1) composed of BLOC1S1, BLOC1S2, BLOC1S3, BLOC1S4, BLOC1S5, BLOC1S6, DTNBP1/BLOC1S7 and SNAPIN/BLOC1S8. Octamer composed of one copy each BLOC1S1, BLOC1S2, BLOC1S3, BLOC1S4, BLOC1S5, BLOC1S6, DTNBP1/BLOC1S7 and SNAPIN/BLOC1S8. The BLOC-1 complex associates with the AP-3 protein complex and membrane protein cargos.

Its subcellular location is the cytoplasm. Its function is as follows. Component of the BLOC-1 complex, a complex that is required for normal biogenesis of lysosome-related organelles (LRO), such as platelet dense granules and melanosomes. In concert with the AP-3 complex, the BLOC-1 complex is required to target membrane protein cargos into vesicles assembled at cell bodies for delivery into neurites and nerve terminals. The BLOC-1 complex, in association with SNARE proteins, is also proposed to be involved in neurite extension. Plays a role in intracellular vesicle trafficking. This Homo sapiens (Human) protein is Biogenesis of lysosome-related organelles complex 1 subunit 4 (BLOC1S4).